The sequence spans 231 residues: 5'-methylthioadenosine/S-adenosylhomocysteine nucleosidase (231 aa).

E12 acts as the Proton acceptor in catalysis. Substrate contacts are provided by residues G78, V153, and 174 to 175 (ME). Catalysis depends on D198, which acts as the Proton donor.

This sequence belongs to the PNP/UDP phosphorylase family. MtnN subfamily.

The catalysed reaction is S-adenosyl-L-homocysteine + H2O = S-(5-deoxy-D-ribos-5-yl)-L-homocysteine + adenine. The enzyme catalyses S-methyl-5'-thioadenosine + H2O = 5-(methylsulfanyl)-D-ribose + adenine. It catalyses the reaction 5'-deoxyadenosine + H2O = 5-deoxy-D-ribose + adenine. It participates in amino-acid biosynthesis; L-methionine biosynthesis via salvage pathway; S-methyl-5-thio-alpha-D-ribose 1-phosphate from S-methyl-5'-thioadenosine (hydrolase route): step 1/2. Its function is as follows. Catalyzes the irreversible cleavage of the glycosidic bond in both 5'-methylthioadenosine (MTA) and S-adenosylhomocysteine (SAH/AdoHcy) to adenine and the corresponding thioribose, 5'-methylthioribose and S-ribosylhomocysteine, respectively. Also cleaves 5'-deoxyadenosine, a toxic by-product of radical S-adenosylmethionine (SAM) enzymes, into 5-deoxyribose and adenine. This chain is 5'-methylthioadenosine/S-adenosylhomocysteine nucleosidase, found in Vibrio campbellii (strain ATCC BAA-1116).